A 389-amino-acid chain; its full sequence is Arrestin-C (389 aa).

It belongs to the arrestin family. As to expression, retina and pineal gland.

May play a role in an as yet undefined retina-specific signal transduction. Could bind to photoactivated-phosphorylated red/green opsins. In Aquarana catesbeiana (American bullfrog), this protein is Arrestin-C (arr3).